A 100-amino-acid chain; its full sequence is Small ribosomal subunit protein uS14c (100 aa).

The segment at 1–22 (MARKGLIQRENKRQKLEQKYHS) is disordered. Positions 7-20 (IQRENKRQKLEQKY) are enriched in basic and acidic residues.

The protein belongs to the universal ribosomal protein uS14 family. In terms of assembly, part of the 30S ribosomal subunit.

The protein localises to the plastid. It is found in the chloroplast. Binds 16S rRNA, required for the assembly of 30S particles. The polypeptide is Small ribosomal subunit protein uS14c (Daucus carota (Wild carrot)).